The primary structure comprises 154 residues: 6,7-dimethyl-8-ribityllumazine synthase (154 aa).

Residues Phe23, 57–59, and 81–83 contribute to the 5-amino-6-(D-ribitylamino)uracil site; these read AFE and AVI. 86 to 87 provides a ligand contact to (2S)-2-hydroxy-3-oxobutyl phosphate; that stretch reads AT. His89 functions as the Proton donor in the catalytic mechanism. Phe114 contributes to the 5-amino-6-(D-ribitylamino)uracil binding site. Arg128 serves as a coordination point for (2S)-2-hydroxy-3-oxobutyl phosphate.

Belongs to the DMRL synthase family.

It carries out the reaction (2S)-2-hydroxy-3-oxobutyl phosphate + 5-amino-6-(D-ribitylamino)uracil = 6,7-dimethyl-8-(1-D-ribityl)lumazine + phosphate + 2 H2O + H(+). The protein operates within cofactor biosynthesis; riboflavin biosynthesis; riboflavin from 2-hydroxy-3-oxobutyl phosphate and 5-amino-6-(D-ribitylamino)uracil: step 1/2. Functionally, catalyzes the formation of 6,7-dimethyl-8-ribityllumazine by condensation of 5-amino-6-(D-ribitylamino)uracil with 3,4-dihydroxy-2-butanone 4-phosphate. This is the penultimate step in the biosynthesis of riboflavin. The chain is 6,7-dimethyl-8-ribityllumazine synthase from Nautilia profundicola (strain ATCC BAA-1463 / DSM 18972 / AmH).